A 348-amino-acid chain; its full sequence is Beta-hexosaminidase (348 aa).

Substrate-binding positions include Asp-64, Arg-72, Arg-138, and 168 to 169; that span reads KH. His-181 serves as the catalytic Proton donor/acceptor. The Nucleophile role is filled by Asp-252.

Belongs to the glycosyl hydrolase 3 family. NagZ subfamily.

It is found in the cytoplasm. The catalysed reaction is Hydrolysis of terminal non-reducing N-acetyl-D-hexosamine residues in N-acetyl-beta-D-hexosaminides.. It functions in the pathway cell wall biogenesis; peptidoglycan recycling. In terms of biological role, plays a role in peptidoglycan recycling by cleaving the terminal beta-1,4-linked N-acetylglucosamine (GlcNAc) from peptide-linked peptidoglycan fragments, giving rise to free GlcNAc, anhydro-N-acetylmuramic acid and anhydro-N-acetylmuramic acid-linked peptides. This chain is Beta-hexosaminidase, found in Alkalilimnicola ehrlichii (strain ATCC BAA-1101 / DSM 17681 / MLHE-1).